Reading from the N-terminus, the 147-residue chain is Ubiquitin-conjugating enzyme E2 D4 (147 aa).

One can recognise a UBC core domain in the interval 1 to 147 (MALKRIQKEL…AREWTQKYAM (147 aa)). Cysteine 85 serves as the catalytic Glycyl thioester intermediate.

This sequence belongs to the ubiquitin-conjugating enzyme family.

The enzyme catalyses S-ubiquitinyl-[E1 ubiquitin-activating enzyme]-L-cysteine + [E2 ubiquitin-conjugating enzyme]-L-cysteine = [E1 ubiquitin-activating enzyme]-L-cysteine + S-ubiquitinyl-[E2 ubiquitin-conjugating enzyme]-L-cysteine.. Its pathway is protein modification; protein ubiquitination. Functionally, accepts ubiquitin from the E1 complex and catalyzes its covalent attachment to other proteins. In vitro able to promote polyubiquitination using all 7 ubiquitin Lys residues, but may prefer 'Lys-11' and 'Lys-48'-linked polyubiquitination. The sequence is that of Ubiquitin-conjugating enzyme E2 D4 (UBE2D4) from Homo sapiens (Human).